A 458-amino-acid polypeptide reads, in one-letter code: Enolase (458 aa).

Gln-177 contacts (2R)-2-phosphoglycerate. Catalysis depends on Glu-219, which acts as the Proton donor. The Mg(2+) site is built by Asp-256, Glu-310, and Asp-337. The (2R)-2-phosphoglycerate site is built by Lys-362, Arg-391, Ser-392, and Lys-413. Lys-362 acts as the Proton acceptor in catalysis.

The protein belongs to the enolase family. The cofactor is Mg(2+).

The protein resides in the cytoplasm. It localises to the secreted. It is found in the cell surface. The enzyme catalyses (2R)-2-phosphoglycerate = phosphoenolpyruvate + H2O. Its pathway is carbohydrate degradation; glycolysis; pyruvate from D-glyceraldehyde 3-phosphate: step 4/5. Catalyzes the reversible conversion of 2-phosphoglycerate (2-PG) into phosphoenolpyruvate (PEP). It is essential for the degradation of carbohydrates via glycolysis. This is Enolase from Mycoplasma genitalium (strain ATCC 33530 / DSM 19775 / NCTC 10195 / G37) (Mycoplasmoides genitalium).